The sequence spans 427 residues: ATP-sensitive inward rectifier potassium channel 12 (427 aa).

Residues 1–77 (MTASGRTNPY…LADMFTTCVD (77 aa)) are Cytoplasmic-facing. Position 75 is an S-nitrosocysteine (cysteine 75). A helical membrane pass occupies residues 78–104 (IRWRYMLLIFSLAFLASWLLFGVIFWV). Arginine 79 and arginine 81 together coordinate a 1,2-diacyl-sn-glycero-3-phospho-(1D-myo-inositol-4,5-bisphosphate). At 105-129 (IAVAHGDLEPAEAHGRTPCVLQVHG) the chain is on the extracellular side. Cysteine 123 and cysteine 155 are oxidised to a cystine. The segment at residues 130-146 (FMAAFLFSIETQTTIGY) is an intramembrane region (helical; Pore-forming). Residues threonine 143, isoleucine 144, glycine 145, and tyrosine 146 each contribute to the K(+) site. The short motif at 143–148 (TIGYGL) is the Selectivity filter element. At 147 to 155 (GLRCVTEEC) the chain is on the extracellular side. A helical membrane pass occupies residues 156-183 (PVAVFMVVAQSIVGCIIDSFMIGAIMAK). Positions 183 and 188 each coordinate a 1,2-diacyl-sn-glycero-3-phospho-(1D-myo-inositol-4,5-bisphosphate). The Cytoplasmic portion of the chain corresponds to 184 to 427 (MARPKKRAQT…QRPYRRESEI (244 aa)). Over residues 387-396 (DEEDEVDGEQ) the composition is skewed to acidic residues. The tract at residues 387-427 (DEEDEVDGEQDSLGPQARRDFDRPQAGTALEQRPYRRESEI) is disordered. A PDZ-binding motif is present at residues 425–427 (SEI).

It belongs to the inward rectifier-type potassium channel (TC 1.A.2.1) family. KCNJ12 subfamily. Homotetramer. Forms heteromer with KCNJ4. Association, via its PDZ-recognition domain, with LIN7A, LIN7B, LIN7C, DLG1, CASK and APBA1 plays a key role in its localization and trafficking.

The protein localises to the membrane. The enzyme catalyses K(+)(in) = K(+)(out). Its activity is regulated as follows. Activated by phosphatidylinositol 4,5-biphosphate (PtdIns(4,5)P2). PtdIns(4,5)P2 binding to the cytoplasmic side of the channel triggers a conformation change leading to channel opening. Inward rectifying potassium channel that probably participates in controlling the resting membrane potential in electrically excitable cells. Probably participates in establishing action potential waveform and excitability of neuronal and muscle tissues. Inward rectifier potassium channels are characterized by a greater tendency to allow potassium to flow into the cell rather than out of it. Their voltage dependence is regulated by the concentration of extracellular potassium; as external potassium is raised, the voltage range of the channel opening shifts to more positive voltages. The inward rectification is mainly due to the blockage of outward current by internal magnesium. This is ATP-sensitive inward rectifier potassium channel 12 (KCNJ12) from Bos taurus (Bovine).